Reading from the N-terminus, the 294-residue chain is Indole-3-glycerol phosphate synthase (294 aa).

The protein belongs to the TrpC family.

It catalyses the reaction 1-(2-carboxyphenylamino)-1-deoxy-D-ribulose 5-phosphate + H(+) = (1S,2R)-1-C-(indol-3-yl)glycerol 3-phosphate + CO2 + H2O. Its pathway is amino-acid biosynthesis; L-tryptophan biosynthesis; L-tryptophan from chorismate: step 4/5. This is Indole-3-glycerol phosphate synthase from Synechococcus sp. (strain RCC307).